The chain runs to 285 residues: Probable endonuclease 4 (285 aa).

Zn(2+) is bound by residues H69, H109, E145, D179, H182, H216, D229, H231, and E261.

Belongs to the AP endonuclease 2 family. It depends on Zn(2+) as a cofactor.

It carries out the reaction Endonucleolytic cleavage to 5'-phosphooligonucleotide end-products.. Endonuclease IV plays a role in DNA repair. It cleaves phosphodiester bonds at apurinic or apyrimidinic (AP) sites, generating a 3'-hydroxyl group and a 5'-terminal sugar phosphate. This chain is Probable endonuclease 4, found in Shigella dysenteriae serotype 1 (strain Sd197).